The chain runs to 1068 residues: Disheveled-associated activator of morphogenesis 2 (1068 aa).

A GBD/FH3 domain is found at Ser40 to Val416. Residues Met434–Thr516 are a coiled coil. The interval Leu514 to Tyr586 is disordered. The FH1 domain maps to Pro518–Arg594. Positions Leu540–Pro572 are enriched in pro residues. The FH2 domain occupies Lys595 to Met994. A Phosphoserine modification is found at Ser1015. One can recognise a DAD domain in the interval Ser1016–Lys1048.

It belongs to the formin homology family. Interacts with DVL3. Interacts with INF2. As to expression, expressed in most tissues examined. Expressed in kidney glomeruli.

Its function is as follows. Key regulator of the Wnt signaling pathway, which is required for various processes during development, such as dorsal patterning, determination of left/right symmetry or myelination in the central nervous system. Acts downstream of Wnt ligands and upstream of beta-catenin (CTNNB1). Required for canonical Wnt signaling pathway during patterning in the dorsal spinal cord by promoting the aggregation of Disheveled (Dvl) complexes, thereby clustering and formation of Wnt receptor signalosomes and potentiating Wnt activity. During dorsal patterning of the spinal cord, inhibits oligodendrocytes differentiation via interaction with PIP5K1A. Also regulates non-canonical Wnt signaling pathway. Acts downstream of PITX2 in the developing gut and is required for left/right asymmetry within dorsal mesentery: affects mesenchymal condensation by lengthening cadherin-based junctions through WNT5A and non-canonical Wnt signaling, inducing polarized condensation in the left dorsal mesentery necessary to initiate gut rotation. Together with DAAM1, required for myocardial maturation and sarcomere assembly. Is a regulator of actin nucleation and elongation, filopodia formation and podocyte migration. In Homo sapiens (Human), this protein is Disheveled-associated activator of morphogenesis 2.